The following is a 256-amino-acid chain: Trans-aconitate 2-methyltransferase (256 aa).

The protein belongs to the methyltransferase superfamily. Tam family.

Its subcellular location is the cytoplasm. The catalysed reaction is trans-aconitate + S-adenosyl-L-methionine = (E)-3-(methoxycarbonyl)pent-2-enedioate + S-adenosyl-L-homocysteine. Catalyzes the S-adenosylmethionine monomethyl esterification of trans-aconitate. The protein is Trans-aconitate 2-methyltransferase of Agrobacterium fabrum (strain C58 / ATCC 33970) (Agrobacterium tumefaciens (strain C58)).